The sequence spans 406 residues: Methyltransferase cfoD (406 aa).

Aspartate 270 and arginine 312 together coordinate S-adenosyl-L-methionine. Histidine 315 functions as the Proton acceptor in the catalytic mechanism.

It belongs to the class I-like SAM-binding methyltransferase superfamily. Cation-independent O-methyltransferase family.

It participates in secondary metabolite biosynthesis; flavonoid biosynthesis. Its function is as follows. Methyltransferase; part of the gene cluster that mediates the biosynthesis of chlorflavonin, a fungal flavonoid with acetolactate synthase inhibitory activity. Within the pathway, cfoD is responsible for the methylation at position C3-OH of flavonoid. The pathway begins with the PKS-NRPS hybrid synthetase cfoA that uses benzoic acid or p-hydroxybenzoic acid as a starter unit with four rounds of chain elongation using malonyl-CoA to form the chalcone skeleton. Then, a new type of chalcone isomerase, cfoK, catalyzes the conversion of the chalcone into a flavanone by a histidine-mediated oxa-Michael addition mechanism. The desaturation of flavanone to flavone is catalyzed by a new type of flavone synthase, the flavin mononucleotide (FMN)-dependent oxidoreductase cfoJ. Monooxygenases cfoF, cfoG, and P450 cfoH are responsible for the hydroxylation of the flavonoid skeleton at sites C3, C8, and C2', respectively. Like cfoF, the dehydratase cfoI also plays a role in the hydroxylation of position C3. Methyltransferases cfoB, cfoC, and cfoD then catalyze the methylation of C7-OH, C8-OH, and C3-OH, respectively. Finally, the monooxygenase cfoE is responsible for the chlorination of flavonoid at position C3'. The chain is Methyltransferase cfoD from Aspergillus candidus.